Here is an 808-residue protein sequence, read N- to C-terminus: Probable ATP-dependent helicase MJ1401 (808 aa).

The Q motif motif lies at 189–217 (YKIDELDIPEELKEIIKSRGIEELLPVQT). The Helicase ATP-binding domain occupies 221-391 (KAGLLNGDDL…QLNAKLVLYN (171 aa)). 234-241 (SATSSGKT) lines the ATP pocket. The DEIH box motif lies at 336–339 (DEIH). Residues 396 to 585 (PLERHIIFCK…EDEEEEQILA (190 aa)) enclose the Helicase C-terminal domain.

The protein belongs to the DEAD box helicase family.

The chain is Probable ATP-dependent helicase MJ1401 from Methanocaldococcus jannaschii (strain ATCC 43067 / DSM 2661 / JAL-1 / JCM 10045 / NBRC 100440) (Methanococcus jannaschii).